We begin with the raw amino-acid sequence, 524 residues long: NAD(P)H-quinone oxidoreductase chain 4, chloroplastic (524 aa).

A run of 14 helical transmembrane segments spans residues 4–24 (YPWL…IPLI), 31–51 (LIRW…TYVF), 87–107 (IALV…AWPV), 113–133 (LFYF…LAQD), 134–154 (LLLF…LLSM), 167–187 (FILY…TISL), 211–231 (ILVY…FPFH), 242–262 (HYST…YGFI), 275–295 (IFAP…ALVS), 308–328 (SSVS…DLGL), 330–350 (GAIL…FLAG), 386–406 (LALP…GIVA), 417–437 (IITC…LSMV), and 465–485 (VFII…PDLT).

This sequence belongs to the complex I subunit 4 family.

It is found in the plastid. The protein resides in the chloroplast thylakoid membrane. It carries out the reaction a plastoquinone + NADH + (n+1) H(+)(in) = a plastoquinol + NAD(+) + n H(+)(out). The enzyme catalyses a plastoquinone + NADPH + (n+1) H(+)(in) = a plastoquinol + NADP(+) + n H(+)(out). This chain is NAD(P)H-quinone oxidoreductase chain 4, chloroplastic, found in Staurastrum punctulatum (Green alga).